Here is a 33-residue protein sequence, read N- to C-terminus: MSPPSSMCSPVPLLAAASGQNRMTQGQHFLQKV.

In terms of tissue distribution, expressed in testis and melanoma cell lines.

The polypeptide is Putative tumor antigen NA88-A (VENTXP1) (Homo sapiens (Human)).